The chain runs to 229 residues: MSTWANLGLQDSASPLMEQLIFFHDHALLILVMITVLVGYLMFMLFFNSYVNRFLLHGQLIEMIWTILPAIILLFIAMPSLRLLYLLDEINEPSITLKSIGHQWYWSYEYSDFNNIEFDSYMIPTNELANDGFRLLDVDNRIILPMNSQIRILVTAADVIHSWTVPALGVKVDGTPGRLNQTNFFINRPGLFYGQCSEICGANHSFMPIVIESVPVNYFIKWISNSVNS.

The Mitochondrial intermembrane segment spans residues 1–26; the sequence is MSTWANLGLQDSASPLMEQLIFFHDH. Residues 27-48 traverse the membrane as a helical segment; it reads ALLILVMITVLVGYLMFMLFFN. At 49-62 the chain is on the mitochondrial matrix side; the sequence is SYVNRFLLHGQLIE. Residues 63 to 82 form a helical membrane-spanning segment; that stretch reads MIWTILPAIILLFIAMPSLR. The Mitochondrial intermembrane segment spans residues 83 to 229; the sequence is LLYLLDEINE…IKWISNSVNS (147 aa). Residues His161, Cys196, Glu198, Cys200, His204, and Met207 each contribute to the Cu cation site. Glu198 is a binding site for Mg(2+).

Belongs to the cytochrome c oxidase subunit 2 family. As to quaternary structure, component of the cytochrome c oxidase (complex IV, CIV), a multisubunit enzyme composed of a catalytic core of 3 subunits and several supernumerary subunits. The complex exists as a monomer or a dimer and forms supercomplexes (SCs) in the inner mitochondrial membrane with ubiquinol-cytochrome c oxidoreductase (cytochrome b-c1 complex, complex III, CIII). It depends on Cu cation as a cofactor.

It is found in the mitochondrion inner membrane. It catalyses the reaction 4 Fe(II)-[cytochrome c] + O2 + 8 H(+)(in) = 4 Fe(III)-[cytochrome c] + 2 H2O + 4 H(+)(out). Functionally, component of the cytochrome c oxidase, the last enzyme in the mitochondrial electron transport chain which drives oxidative phosphorylation. The respiratory chain contains 3 multisubunit complexes succinate dehydrogenase (complex II, CII), ubiquinol-cytochrome c oxidoreductase (cytochrome b-c1 complex, complex III, CIII) and cytochrome c oxidase (complex IV, CIV), that cooperate to transfer electrons derived from NADH and succinate to molecular oxygen, creating an electrochemical gradient over the inner membrane that drives transmembrane transport and the ATP synthase. Cytochrome c oxidase is the component of the respiratory chain that catalyzes the reduction of oxygen to water. Electrons originating from reduced cytochrome c in the intermembrane space (IMS) are transferred via the dinuclear copper A center (CU(A)) of subunit 2 and heme A of subunit 1 to the active site in subunit 1, a binuclear center (BNC) formed by heme A3 and copper B (CU(B)). The BNC reduces molecular oxygen to 2 water molecules using 4 electrons from cytochrome c in the IMS and 4 protons from the mitochondrial matrix. This Drosophila narragansett (Fruit fly) protein is Cytochrome c oxidase subunit 2 (mt:CoII).